The primary structure comprises 597 residues: tRNA uridine 5-carboxymethylaminomethyl modification enzyme MnmG (597 aa).

An FAD-binding site is contributed by 10–15 (GGGHAG). 267–281 (GPRYCPSIEDKVVRF) lines the NAD(+) pocket.

It belongs to the MnmG family. As to quaternary structure, homodimer. Heterotetramer of two MnmE and two MnmG subunits. FAD is required as a cofactor.

The protein localises to the cytoplasm. In terms of biological role, NAD-binding protein involved in the addition of a carboxymethylaminomethyl (cmnm) group at the wobble position (U34) of certain tRNAs, forming tRNA-cmnm(5)s(2)U34. The chain is tRNA uridine 5-carboxymethylaminomethyl modification enzyme MnmG from Thermus thermophilus (strain ATCC BAA-163 / DSM 7039 / HB27).